Here is a 254-residue protein sequence, read N- to C-terminus: Type III pantothenate kinase (254 aa).

6–13 lines the ATP pocket; that stretch reads DVGNTNTV. Substrate-binding positions include tyrosine 100 and 107–110; that span reads GADR. The active-site Proton acceptor is the aspartate 109. Aspartate 129 is a K(+) binding site. ATP is bound at residue threonine 132. Threonine 184 provides a ligand contact to substrate.

It belongs to the type III pantothenate kinase family. Homodimer. NH4(+) is required as a cofactor. K(+) serves as cofactor.

The protein resides in the cytoplasm. The enzyme catalyses (R)-pantothenate + ATP = (R)-4'-phosphopantothenate + ADP + H(+). Its pathway is cofactor biosynthesis; coenzyme A biosynthesis; CoA from (R)-pantothenate: step 1/5. Functionally, catalyzes the phosphorylation of pantothenate (Pan), the first step in CoA biosynthesis. The polypeptide is Type III pantothenate kinase (Halalkalibacterium halodurans (strain ATCC BAA-125 / DSM 18197 / FERM 7344 / JCM 9153 / C-125) (Bacillus halodurans)).